A 114-amino-acid chain; its full sequence is Cytochrome b-c1 complex subunit 1, mitochondrial (114 aa).

At Lys31 the chain carries N6-acetyllysine.

The protein belongs to the peptidase M16 family. UQCRC1/QCR1 subfamily. As to quaternary structure, component of the ubiquinol-cytochrome c oxidoreductase (cytochrome b-c1 complex, complex III, CIII), a multisubunit enzyme composed of 11 subunits. The complex is composed of 3 respiratory subunits cytochrome b, cytochrome c1 and Rieske protein UQCRFS1, 2 core protein subunits UQCRC1/QCR1 and UQCRC2/QCR2, and 6 low-molecular weight protein subunits UQCRH/QCR6, UQCRB/QCR7, UQCRQ/QCR8, UQCR10/QCR9, UQCR11/QCR10 and subunit 9, the cleavage product of Rieske protein UQCRFS1. The complex exists as an obligatory dimer and forms supercomplexes (SCs) in the inner mitochondrial membrane with NADH-ubiquinone oxidoreductase (complex I, CI) and cytochrome c oxidase (complex IV, CIV), resulting in different assemblies (supercomplex SCI(1)III(2)IV(1) and megacomplex MCI(2)III(2)IV(2)). Interacts with UQCC6. Interacts with STMP1.

The protein resides in the mitochondrion inner membrane. Component of the ubiquinol-cytochrome c oxidoreductase, a multisubunit transmembrane complex that is part of the mitochondrial electron transport chain which drives oxidative phosphorylation. The respiratory chain contains 3 multisubunit complexes succinate dehydrogenase (complex II, CII), ubiquinol-cytochrome c oxidoreductase (cytochrome b-c1 complex, complex III, CIII) and cytochrome c oxidase (complex IV, CIV), that cooperate to transfer electrons derived from NADH and succinate to molecular oxygen, creating an electrochemical gradient over the inner membrane that drives transmembrane transport and the ATP synthase. The cytochrome b-c1 complex catalyzes electron transfer from ubiquinol to cytochrome c, linking this redox reaction to translocation of protons across the mitochondrial inner membrane, with protons being carried across the membrane as hydrogens on the quinol. In the process called Q cycle, 2 protons are consumed from the matrix, 4 protons are released into the intermembrane space and 2 electrons are passed to cytochrome c. The 2 core subunits UQCRC1/QCR1 and UQCRC2/QCR2 are homologous to the 2 mitochondrial-processing peptidase (MPP) subunits beta-MPP and alpha-MPP respectively, and they seem to have preserved their MPP processing properties. May be involved in the in situ processing of UQCRFS1 into the mature Rieske protein and its mitochondrial targeting sequence (MTS)/subunit 9 when incorporated into complex III. Seems to play an important role in the maintenance of proper mitochondrial function in nigral dopaminergic neurons. The sequence is that of Cytochrome b-c1 complex subunit 1, mitochondrial from Mesocricetus auratus (Golden hamster).